The chain runs to 354 residues: Tryptophan--tRNA ligase (354 aa).

ATP contacts are provided by residues 13-15 (QPT) and 21-22 (GN). Residues 14 to 22 (PTGNLHLGN) carry the 'HIGH' region motif. D137 contributes to the L-tryptophan binding site. ATP contacts are provided by residues 149 to 151 (GDD), V208, and 217 to 221 (KMSKS). Residues 217-221 (KMSKS) carry the 'KMSKS' region motif.

Belongs to the class-I aminoacyl-tRNA synthetase family. As to quaternary structure, homodimer.

It is found in the cytoplasm. It carries out the reaction tRNA(Trp) + L-tryptophan + ATP = L-tryptophyl-tRNA(Trp) + AMP + diphosphate + H(+). Its function is as follows. Catalyzes the attachment of tryptophan to tRNA(Trp). This chain is Tryptophan--tRNA ligase, found in Agrobacterium fabrum (strain C58 / ATCC 33970) (Agrobacterium tumefaciens (strain C58)).